The chain runs to 68 residues: Large ribosomal subunit protein uL29 (68 aa).

This sequence belongs to the universal ribosomal protein uL29 family.

In Chloroflexus aggregans (strain MD-66 / DSM 9485), this protein is Large ribosomal subunit protein uL29.